A 275-amino-acid chain; its full sequence is NADPH-dependent 7-cyano-7-deazaguanine reductase (275 aa).

Residue 81 to 83 (IES) coordinates substrate. NADPH is bound at residue 83-84 (SK). C181 functions as the Thioimide intermediate in the catalytic mechanism. D188 acts as the Proton donor in catalysis. A substrate-binding site is contributed by 220–221 (HE). An NADPH-binding site is contributed by 249-250 (RG).

It belongs to the GTP cyclohydrolase I family. QueF type 2 subfamily. As to quaternary structure, homodimer.

The protein localises to the cytoplasm. The catalysed reaction is 7-aminomethyl-7-carbaguanine + 2 NADP(+) = 7-cyano-7-deazaguanine + 2 NADPH + 3 H(+). It participates in tRNA modification; tRNA-queuosine biosynthesis. In terms of biological role, catalyzes the NADPH-dependent reduction of 7-cyano-7-deazaguanine (preQ0) to 7-aminomethyl-7-deazaguanine (preQ1). This chain is NADPH-dependent 7-cyano-7-deazaguanine reductase, found in Xylella fastidiosa (strain M12).